The primary structure comprises 572 residues: Urease subunit alpha (572 aa).

A Urease domain is found at 131–572 (GGIDAHIHFI…LPLAQRYFLF (442 aa)). Positions 136, 138, and 219 each coordinate Ni(2+). The residue at position 219 (Lys-219) is an N6-carboxylysine. His-221 lines the substrate pocket. His-248 and His-274 together coordinate Ni(2+). His-322 acts as the Proton donor in catalysis. Ni(2+) is bound at residue Asp-362.

The protein belongs to the metallo-dependent hydrolases superfamily. Urease alpha subunit family. Heterotrimer of UreA (gamma), UreB (beta) and UreC (alpha) subunits. Three heterotrimers associate to form the active enzyme. Requires Ni cation as cofactor. In terms of processing, carboxylation allows a single lysine to coordinate two nickel ions.

It is found in the cytoplasm. The enzyme catalyses urea + 2 H2O + H(+) = hydrogencarbonate + 2 NH4(+). Its pathway is nitrogen metabolism; urea degradation; CO(2) and NH(3) from urea (urease route): step 1/1. The polypeptide is Urease subunit alpha (Thermosynechococcus vestitus (strain NIES-2133 / IAM M-273 / BP-1)).